A 154-amino-acid chain; its full sequence is MVKAVATVRGDSKISGTVTFEQSEENSPTTITWNITGNDANAERGMHVHQFGDNTNGCTSAGPHFNPHGQTHGAPTDEVRHVGDLGNFKTDAQGNATGSVQDSHIKLIGPLSVIGRTVVVHSGTDDLGKGENEESKKTGNAGTRPACGVIGIAA.

3 residues coordinate Cu cation: histidine 47, histidine 49, and histidine 64. A disulfide bridge links cysteine 58 with cysteine 147. Residues histidine 64, histidine 72, histidine 81, and aspartate 84 each contribute to the Zn(2+) site. Histidine 121 serves as a coordination point for Cu cation. Residues 124 to 137 are compositionally biased toward basic and acidic residues; sequence TDDLGKGENEESKK. The interval 124 to 144 is disordered; sequence TDDLGKGENEESKKTGNAGTR. Arginine 144 contacts substrate.

It belongs to the Cu-Zn superoxide dismutase family. Homodimer. The cofactor is Cu cation. Requires Zn(2+) as cofactor.

The protein localises to the cytoplasm. It catalyses the reaction 2 superoxide + 2 H(+) = H2O2 + O2. Destroys radicals which are normally produced within the cells and which are toxic to biological systems. The protein is Superoxide dismutase [Cu-Zn] (sod1) of Botryotinia fuckeliana (Noble rot fungus).